A 615-amino-acid chain; its full sequence is Medium-chain acyl-CoA ligase ACSF2, mitochondrial (615 aa).

A mitochondrion-targeting transit peptide spans 1 to 41; sequence MAVYVGMLRLGRLCAGSSGVLGARAALSRSWQEARLQGVRF. Lys179 is subject to N6-acetyllysine. The residue at position 182 (Lys182) is an N6-acetyllysine; alternate. The residue at position 182 (Lys182) is an N6-succinyllysine; alternate. 263 to 271 serves as a coordination point for ATP; sequence TSGTTGSPK. N6-acetyllysine is present on residues Lys340 and Lys398. Lys478 bears the N6-succinyllysine mark. ATP is bound by residues Asp493 and Arg508. Lys510 carries the N6-acetyllysine modification. N6-acetyllysine; alternate occurs at positions 544 and 570. N6-succinyllysine; alternate occurs at positions 544 and 570. Lys599 contacts ATP. Lys599 carries the post-translational modification N6-succinyllysine.

Belongs to the ATP-dependent AMP-binding enzyme family.

The protein resides in the mitochondrion. The catalysed reaction is a medium-chain fatty acid + ATP + CoA = a medium-chain fatty acyl-CoA + AMP + diphosphate. The enzyme catalyses octanoate + ATP + CoA = octanoyl-CoA + AMP + diphosphate. In terms of biological role, acyl-CoA synthases catalyze the initial reaction in fatty acid metabolism, by forming a thioester with CoA. Has some preference toward medium-chain substrates. Plays a role in adipocyte differentiation. The sequence is that of Medium-chain acyl-CoA ligase ACSF2, mitochondrial from Homo sapiens (Human).